The primary structure comprises 211 residues: MVVSKQEAISFSVTSLGWVGAIVSCVLPVWRVTFPDDETDPDATIWEGLWHICQVRENRWIQCTLYDTRILVAQDIKVSRVFMVICTIGTWLGLLLCVLGDWRINCFMNFTIEENLLKVAGGMFLSVGLLMLVPLSWVTHNIIHGFFNPLLGFSKKVQMGSSLSLAWTSSLLLLLGGILLCVNIPVCRDFPRCIETPSARPSGANNDTLDV.

At 1-8 the chain is on the cytoplasmic side; it reads MVVSKQEA. The chain crosses the membrane as a helical span at residues 9 to 29; it reads ISFSVTSLGWVGAIVSCVLPV. The Extracellular segment spans residues 30 to 80; sequence WRVTFPDDETDPDATIWEGLWHICQVRENRWIQCTLYDTRILVAQDIKVSR. A helical transmembrane segment spans residues 81 to 101; the sequence is VFMVICTIGTWLGLLLCVLGD. Over 102 to 118 the chain is Cytoplasmic; that stretch reads WRINCFMNFTIEENLLK. A helical transmembrane segment spans residues 119-139; the sequence is VAGGMFLSVGLLMLVPLSWVT. Topologically, residues 140-165 are extracellular; the sequence is HNIIHGFFNPLLGFSKKVQMGSSLSL. The chain crosses the membrane as a helical span at residues 166 to 186; it reads AWTSSLLLLLGGILLCVNIPV. Residues 187–211 are Cytoplasmic-facing; it reads CRDFPRCIETPSARPSGANNDTLDV.

The protein belongs to the claudin family.

Its subcellular location is the cell junction. The protein resides in the tight junction. The protein localises to the cell membrane. In terms of biological role, plays a major role in tight junction-specific obliteration of the intercellular space, through calcium-independent cell-adhesion activity. The sequence is that of Claudin-13 (Cldn13) from Mus musculus (Mouse).